A 150-amino-acid polypeptide reads, in one-letter code: Endoribonuclease YbeY (150 aa).

Histidine 116, histidine 120, and histidine 126 together coordinate Zn(2+).

It belongs to the endoribonuclease YbeY family. Zn(2+) serves as cofactor.

Its subcellular location is the cytoplasm. Single strand-specific metallo-endoribonuclease involved in late-stage 70S ribosome quality control and in maturation of the 3' terminus of the 16S rRNA. The chain is Endoribonuclease YbeY from Mesomycoplasma hyopneumoniae (strain 232) (Mycoplasma hyopneumoniae).